The sequence spans 160 residues: SDDKKAKAATSSVLTKFTQNQIQEMKEAFTMIDQNRDGLIDVSDLKEMYSNLGTAPQDSVLQAMVKEAPQMNFTGFLSLFSEKMSGTDPEETLRNAFQMFDSDNTGYIPEEYMKDLLENMGDNFSKDEVRQTWKEAPIAGGKVDYNAFVSKIKGKEQDDA.

Ser-1 carries the blocked amino end (Ser) modification. A Phosphoserine modification is found at Ser-11. EF-hand domains lie at 20 to 55 (NQIQEMKEAFTMIDQNRDGLIDVSDLKEMYSNLGTA) and 88 to 123 (DPEETLRNAFQMFDSDNTGYIPEEYMKDLLENMGDN). 4 residues coordinate Ca(2+): Asp-33, Asn-35, Asp-37, and Asp-44.

Functionally, in molluscan muscle, calcium regulation is associated with myosin rather than with actin. Muscle myosin contains two types of light chains: the catalytic light chain, essential for ATPase activity, and the regulatory light chain, a calcium-binding protein responsible for Ca(2+) dependent binding and Ca(2+) dependent Mg-ATPase activity. The polypeptide is Myosin regulatory light chain, smooth muscle (Spisula sachalinensis (Sakhalin surf-clam)).